Consider the following 49-residue polypeptide: Beta-toxin Rc1 (49 aa).

3 disulfide bridges follow: Cys15–Cys31, Cys22–Cys40, and Cys26–Cys42.

This sequence belongs to the long (4 C-C) scorpion toxin superfamily. Sodium channel inhibitor family. Beta subfamily. As to expression, expressed by the venom gland.

The protein localises to the secreted. Its function is as follows. Beta toxins bind voltage-independently at site-4 of sodium channels (Nav) and shift the voltage of activation toward more negative potentials thereby affecting sodium channel activation and promoting spontaneous and repetitive firing. This toxin acts on X.laevis Nav1.6/SCN8A and insect BgNav1 channels, and also displays a small but significant effect on X.laevis Nav1.4/SCN4A channels. In mice induces nociception (licking and lifting behaviors) during the first 15 minutes after injection, and increases the release of TNF-alpha in J774.1 cells. This chain is Beta-toxin Rc1, found in Rhopalurus crassicauda (Scorpion).